Here is a 359-residue protein sequence, read N- to C-terminus: 3-dehydroquinate synthase (359 aa).

Residues 71-76, 105-109, 129-130, lysine 142, lysine 151, and 169-172 each bind NAD(+); these read DGEAHK, GVIGD, TT, and TLHT. Residues glutamate 184, histidine 247, and histidine 264 each contribute to the Zn(2+) site.

The protein belongs to the sugar phosphate cyclases superfamily. Dehydroquinate synthase family. Requires NAD(+) as cofactor. The cofactor is Co(2+). Zn(2+) serves as cofactor.

It localises to the cytoplasm. It catalyses the reaction 7-phospho-2-dehydro-3-deoxy-D-arabino-heptonate = 3-dehydroquinate + phosphate. It participates in metabolic intermediate biosynthesis; chorismate biosynthesis; chorismate from D-erythrose 4-phosphate and phosphoenolpyruvate: step 2/7. Catalyzes the conversion of 3-deoxy-D-arabino-heptulosonate 7-phosphate (DAHP) to dehydroquinate (DHQ). This is 3-dehydroquinate synthase from Neisseria meningitidis serogroup A / serotype 4A (strain DSM 15465 / Z2491).